The sequence spans 451 residues: Phosphoglucosamine mutase (451 aa).

The active-site Phosphoserine intermediate is S103. 4 residues coordinate Mg(2+): S103, D243, D245, and D247. At S103 the chain carries Phosphoserine.

The protein belongs to the phosphohexose mutase family. Mg(2+) serves as cofactor. In terms of processing, activated by phosphorylation.

It carries out the reaction alpha-D-glucosamine 1-phosphate = D-glucosamine 6-phosphate. Functionally, catalyzes the conversion of glucosamine-6-phosphate to glucosamine-1-phosphate. The protein is Phosphoglucosamine mutase of Levilactobacillus brevis (strain ATCC 367 / BCRC 12310 / CIP 105137 / JCM 1170 / LMG 11437 / NCIMB 947 / NCTC 947) (Lactobacillus brevis).